The sequence spans 911 residues: MQEKYNHIDVERAAQDHWSARDAYRVTEDQAKPKFYACSMLPYPSGKLHMGHVRNYTINDMLTRQLRMKGYNVLMPMGWDAFGLPAENAALKNKVPPAQWTYDNIAYMKKQMQAMGLAIDWSREIATCDPDYYKWNQWLFLKMLEKGIAYRKTQVVNWDPVDQTVLANEQVIDGRGWRTGAPVEKREIPGYYLKITDYAQELLDHVQVGGDKATLTGWPEKVRLMQENWIGKSSGVRFAFTHDIRGADGQPIQDGRLYVFTTRADTIMGVTFCAVAPEHPLALHAAATSPKLAAFIEECKKGGTTEAELAVKEKEGLPTGLFVTHPLTGAQVEVWVGNYVLMSYGDGAVMGVPAHDERDFAFAKKYGIAIRQVIAVEGETFSTEAWADWYGDKQRAVCIESGELDGLPHAAAVDKVAELLAAKGLGEKKTTWRLRDWGVSRQRYWGTPIPIIHCEDCGAQPVPAKDLPVVLPQDLVPDGSGNPLIKSEAFHAGVVCPCCGKSARRETDTMDTFVDSSWYFMRYCDARNSEQMVAEGAEYWMRDQNAATGGSGMDQYIGGIEHAILHLLYARFWTKVMRDLGLVKVDEPFTKLLTQGMVLNHIYSRRTAKGAKEYFWPKDVEHVFDETGKIVGAKLKAEVDSADGLLPVGTDIDYEGVGTMSKSKNNGIDPQELIEKYGADTARLYTMFTAPPELTLEWNDAAVEGSYRFLRRVYNFGAKLSQMDMAGAVQSVAGAKSLDDVEFGKAAKSLRLEIHTVLKQVEYDYQRMQYNTVVSGAMKMINALEDFKSFDDAGAQVALIEGFGILLRVLYPATPHLAHALWSELGYAAHLGDVLDAPWPQVDPQALVQDEISLVLQVNGKLRGAILVSSTADKAEIERIALANEECQKFTNGAVPKKVIVVPGRLVNVVV.

The 'HIGH' region motif lies at 42–52; that stretch reads PYPSGKLHMGH. The 'KMSKS' region signature appears at 659-663; sequence TMSKS. Lys662 is an ATP binding site.

This sequence belongs to the class-I aminoacyl-tRNA synthetase family.

It localises to the cytoplasm. The catalysed reaction is tRNA(Leu) + L-leucine + ATP = L-leucyl-tRNA(Leu) + AMP + diphosphate. The polypeptide is Leucine--tRNA ligase (Delftia acidovorans (strain DSM 14801 / SPH-1)).